A 1111-amino-acid chain; its full sequence is Isoleucine--tRNA ligase (1111 aa).

A 'HIGH' region motif is present at residues 52 to 62; that stretch reads PFANGLPHYGH. Residues 645–649 carry the 'KMSKS' region motif; sequence KLSKR. Lys-648 is a binding site for ATP.

Belongs to the class-I aminoacyl-tRNA synthetase family. IleS type 2 subfamily. As to quaternary structure, monomer. Zn(2+) is required as a cofactor.

It localises to the cytoplasm. The enzyme catalyses tRNA(Ile) + L-isoleucine + ATP = L-isoleucyl-tRNA(Ile) + AMP + diphosphate. Functionally, catalyzes the attachment of isoleucine to tRNA(Ile). As IleRS can inadvertently accommodate and process structurally similar amino acids such as valine, to avoid such errors it has two additional distinct tRNA(Ile)-dependent editing activities. One activity is designated as 'pretransfer' editing and involves the hydrolysis of activated Val-AMP. The other activity is designated 'posttransfer' editing and involves deacylation of mischarged Val-tRNA(Ile). This is Isoleucine--tRNA ligase from Wolbachia pipientis wMel.